A 270-amino-acid chain; its full sequence is Cyclase-like protein 3 (270 aa).

The first 23 residues, 1-23 (MMAHLAPLFLLLLLLLLPLHAAA), serve as a signal peptide directing secretion.

This sequence belongs to the Cyclase 1 superfamily. In terms of tissue distribution, highly expressed in leaf sheaths. leaf collars and flag leaves. Expressed in roots, stems, glumes, young panicles and pistils.

The protein localises to the secreted. It is found in the extracellular space. The protein resides in the extracellular matrix. Its function is as follows. May be involved in response to stresses. This chain is Cyclase-like protein 3, found in Oryza sativa subsp. japonica (Rice).